The following is a 1334-amino-acid chain: Rho1 guanine nucleotide exchange factor 1 (1334 aa).

Disordered regions lie at residues 1–89 (MDYR…ASPV), 135–182 (PQVS…SDSV), 203–245 (LDQN…TSGT), and 381–402 (SLIN…ASSP). A compositionally biased stretch (low complexity) spans 138 to 149 (SNHAPNNSNSPS). A compositionally biased stretch (polar residues) spans 150-164 (LTWHTSSGDDSNQNP). Residues 170–180 (QSQSSTSPVSD) are compositionally biased toward low complexity. Polar residues-rich tracts occupy residues 213 to 227 (VRSS…NSRL), 234 to 245 (HTVGSHSFTSGT), and 381 to 400 (SLIN…SEAS). Position 381 is a phosphoserine (Ser381). Residues 621–808 (KRQEVICEVI…RGFLSRLNVE (188 aa)) form the DH domain. In terms of domain architecture, PH spans 843–973 (QLIFKGPLKK…WLEHIDNQQT (131 aa)). The CNH domain maps to 995-1293 (DNKVNAIGVY…RLLADGRGKL (299 aa)).

Its subcellular location is the cytoplasm. Its function is as follows. Stimulates the exchange of Rho1 and Rho5 GDP-bound form into GTP-bound form. Controls septum formation, cell wall synthesis and localization of F-actin patches. Coordinates actin deposition with cell wall biosynthesis during bipolar growth. The polypeptide is Rho1 guanine nucleotide exchange factor 1 (rgf1) (Schizosaccharomyces pombe (strain 972 / ATCC 24843) (Fission yeast)).